We begin with the raw amino-acid sequence, 901 residues long: Protein translocase subunit SecA (901 aa).

Residues Gln87, 105 to 109 (GEGKT), and Asp512 contribute to the ATP site. Residues 858 to 891 (SHQDDDTAAAAALAAQTGDRKVGRNDPCPCGSGK) are disordered. Zn(2+) contacts are provided by Cys885, Cys887, Cys896, and His897.

It belongs to the SecA family. Monomer and homodimer. Part of the essential Sec protein translocation apparatus which comprises SecA, SecYEG and auxiliary proteins SecDF-YajC and YidC. The cofactor is Zn(2+).

It localises to the cell inner membrane. Its subcellular location is the cytoplasm. The catalysed reaction is ATP + H2O + cellular proteinSide 1 = ADP + phosphate + cellular proteinSide 2.. In terms of biological role, part of the Sec protein translocase complex. Interacts with the SecYEG preprotein conducting channel. Has a central role in coupling the hydrolysis of ATP to the transfer of proteins into and across the cell membrane, serving both as a receptor for the preprotein-SecB complex and as an ATP-driven molecular motor driving the stepwise translocation of polypeptide chains across the membrane. The chain is Protein translocase subunit SecA from Escherichia fergusonii (strain ATCC 35469 / DSM 13698 / CCUG 18766 / IAM 14443 / JCM 21226 / LMG 7866 / NBRC 102419 / NCTC 12128 / CDC 0568-73).